The sequence spans 65 residues: Large ribosomal subunit protein bL35 (65 aa).

This sequence belongs to the bacterial ribosomal protein bL35 family.

The chain is Large ribosomal subunit protein bL35 from Erwinia tasmaniensis (strain DSM 17950 / CFBP 7177 / CIP 109463 / NCPPB 4357 / Et1/99).